The chain runs to 483 residues: V-type proton ATPase subunit H (483 aa).

Residue serine 483 is modified to Phosphoserine.

It belongs to the V-ATPase H subunit family. V-ATPase is a heteromultimeric enzyme made up of two complexes: the ATP-hydrolytic V1 complex and the proton translocation V0 complex. The V1 complex consists of three catalytic AB heterodimers that form a heterohexamer, three peripheral stalks each consisting of EG heterodimers, one central rotor including subunits D and F, and the regulatory subunits C and H. The proton translocation complex V0 consists of the proton transport subunit a, a ring of proteolipid subunits c9c'', rotary subunit d, subunits e and f, and the accessory subunits ATP6AP1/Ac45 and ATP6AP2/PRR. Interacts with AP2M1. Interacts with TM9SF4 in colon cancer cells. In terms of assembly, (Microbial infection) Interacts with HIV-1 Nef protein. As to quaternary structure, (Microbial infection) Interacts with M.tuberculosis PtpA, which blocks V-ATPase trafficking and phagosome acidification. In terms of tissue distribution, widely expressed.

It localises to the cytoplasmic vesicle. It is found in the clathrin-coated vesicle membrane. In terms of biological role, subunit of the V1 complex of vacuolar(H+)-ATPase (V-ATPase), a multisubunit enzyme composed of a peripheral complex (V1) that hydrolyzes ATP and a membrane integral complex (V0) that translocates protons. V-ATPase is responsible for acidifying and maintaining the pH of intracellular compartments and in some cell types, is targeted to the plasma membrane, where it is responsible for acidifying the extracellular environment. Subunit H is essential for V-ATPase activity, but not for the assembly of the complex. Involved in the endocytosis mediated by clathrin-coated pits, required for the formation of endosomes. The sequence is that of V-type proton ATPase subunit H (ATP6V1H) from Homo sapiens (Human).